The primary structure comprises 1476 residues: Cystic fibrosis transmembrane conductance regulator (1476 aa).

At 1 to 77 (MQKSPLEKAS…QLIHALRRCF (77 aa)) the chain is on the cytoplasmic side. The helical transmembrane segment at 78–98 (FWRFLFYGILLYLGEVTKAVQ) threads the bilayer. In terms of domain architecture, ABC transmembrane type-1 1 spans 81-365 (FLFYGILLYL…TAVQIWYDSF (285 aa)). The Extracellular segment spans residues 99-122 (PVLLGRIIASYDPENKVERSIAIY). A helical membrane pass occupies residues 123 to 146 (LGIGLCLLFIVRTLLLHPAIFGLH). The Cytoplasmic portion of the chain corresponds to 147 to 195 (RIGMQMRTAMFSLIYKKTLKLSSRVLDKISIGQLVSLLSNNLNKFDEGL). Residues 196–216 (ALAHFIWIAPLQVTLLMGLLW) traverse the membrane as a helical segment. At 217–222 (DLLQFS) the chain is on the extracellular side. The chain crosses the membrane as a helical span at residues 223–243 (AFCGLGLLIILVIFQAILGKM). The Cytoplasmic portion of the chain corresponds to 244 to 298 (MVKYRDQRAAKINERLVITSEIIDNIYSVKAYCWESAMEKMIENLREVELKMTRK). A helical membrane pass occupies residues 299 to 319 (AAYMRFFTSSAFFFSGFFVVF). Residues 320–339 (LSVLPYTVINGIVLRKIFTT) lie on the Extracellular side of the membrane. Residues 340-358 (ISFCIVLRMSVTRQFPTAV) form a helical membrane-spanning segment. Topologically, residues 359–853 (QIWYDSFGMI…YLRYFTLHKG (495 aa)) are cytoplasmic. ATP is bound by residues tryptophan 401, 458-465 (GSTGSGKT), and glutamine 493. Positions 423 to 646 (SDENNVSFSH…RPDFSSKLMG (224 aa)) constitute an ABC transporter 1 domain. Cysteine 524 carries the S-palmitoyl cysteine lipid modification. Residues serine 549 and serine 660 each carry the phosphoserine modification. The disordered R region stretch occupies residues 654–826 (TEERRSSILT…EEINEEDLKE (173 aa)). Serine 670 carries the post-translational modification Phosphoserine; by PKA. Phosphoserine is present on residues serine 684, serine 698, and serine 710. Phosphothreonine is present on threonine 715. Phosphoserine occurs at positions 732, 763, 785, 790, and 808. A helical transmembrane segment spans residues 854–874 (LLLVLIWCVLVFLVEVAASLF). Residues 854–1153 (LLLVLIWCVL…SSIDTDSLMR (300 aa)) enclose the ABC transmembrane type-1 2 domain. Residues 875–913 (VLWLLKNNPVNSGNNGTKISNSSYVVIITSTSFYYIFYI) are Extracellular-facing. 2 N-linked (GlcNAc...) asparagine glycosylation sites follow: asparagine 889 and asparagine 895. A discontinuously helical membrane pass occupies residues 914 to 934 (YVGVADTLLALSLFRGLPLVH). Topologically, residues 935–985 (TLITASKILHRKMLHSILHAPMSTISKLKAGGILNRFSKDIAILDDFLPLT) are cytoplasmic. Residues 986 to 1006 (IFDFIQLVFIVIGAIIVVSAL) form a helical membrane-spanning segment. At 1007–1008 (QP) the chain is on the extracellular side. Residues 1009–1029 (YIFLATVPGLVVFILLRAYFL) form a helical membrane-spanning segment. At 1030–1090 (HTAQQLKQLE…TANWFMYLAT (61 aa)) the chain is on the cytoplasmic side. The helical transmembrane segment at 1091–1111 (LRWFQMRIDMIFVLFFIVVTF) threads the bilayer. The Extracellular portion of the chain corresponds to 1112 to 1125 (ISILTTGEGEGTAG). Residues 1126-1146 (IILTLAMNIMSTLQWAVNSSI) form a helical membrane-spanning segment. The Cytoplasmic portion of the chain corresponds to 1147–1476 (DTDSLMRSVS…TEEEVQETRL (330 aa)). The ABC transporter 2 domain occupies 1208–1439 (VKDLTVKYMD…KSIFQQAISS (232 aa)). Residues tyrosine 1215 and 1240–1247 (GRTGSGKS) contribute to the ATP site. Positions 1382–1476 (RVLKQAFAGC…TEEEVQETRL (95 aa)) are interaction with GORASP2. Cysteine 1391 carries S-palmitoyl cysteine lipidation. Serine 1440 and serine 1452 each carry phosphoserine. Residues 1446–1476 (FQGRHSSKHKPRTQITALKEETEEEVQETRL) are disordered. The segment covering 1466-1476 (ETEEEVQETRL) has biased composition (acidic residues). The PDZ-binding motif lies at 1474–1476 (TRL).

This sequence belongs to the ABC transporter superfamily. ABCC family. CFTR transporter (TC 3.A.1.202) subfamily. As to quaternary structure, monomer; does not require oligomerization for channel activity. May form oligomers in the membrane. Interacts with SLC26A3, SLC26A6 and NHERF1. Interacts with SHANK2. Interacts with MYO6. Interacts (via C-terminus) with GOPC (via PDZ domain); this promotes CFTR internalization and thereby decreases channel activity. Interacts with SLC4A7 through NHERF1. Found in a complex with MYO5B and RAB11A. Interacts with ANO1. Interacts with SLC26A8. Interacts with AHCYL1; the interaction increases CFTR activity. Interacts with CSE1L. The core-glycosylated form interacts with GORASP2 (via PDZ GRASP-type 1 domain) in respone to ER stress. Interacts with MARCHF2; the interaction leads to CFTR ubiqtuitination and degradation. Interacts with ADGRG2. N-glycosylated. Post-translationally, phosphorylated; cAMP treatment promotes phosphorylation and activates the channel. Dephosphorylation decreases the ATPase activity (in vitro). Phosphorylation at PKA sites activates the channel. Phosphorylation at PKC sites enhances the response to phosphorylation by PKA. Phosphorylated by AMPK; this inhibits channel activity. In terms of processing, ubiquitinated, leading to its degradation in the lysosome. Deubiquitination by USP10 in early endosomes enhances its endocytic recycling to the cell membrane. Ubiquitinated by RNF185 during ER stress. Ubiquitinated by MARCHF2. Expressed in the epididymis (at protein level). In the initial segment of the epididymis, detected on both the luminal and basolateral sides of the ducts where it is expressed in the duct columnar cells as well as in the interstitial smooth muscle cells. Expressed in sperm in the caput. In the cauda, detected along the luminal border but not continuously and is also expressed on the basolateral surface. Within the caudal lumen, detected on sperm. Isoform 1: Expressed in a variety of epithelial tissues including colon, kidney, lung, small intestine, pancreatic duct and testis. Isoform 2: Expressed only in testis. Isoform 3: Expressed only in testis.

The protein resides in the apical cell membrane. The protein localises to the early endosome membrane. It is found in the cell membrane. Its subcellular location is the recycling endosome membrane. It localises to the endoplasmic reticulum membrane. The protein resides in the nucleus. It carries out the reaction ATP + H2O + closed Cl(-) channel = ADP + phosphate + open Cl(-) channel.. The enzyme catalyses chloride(in) = chloride(out). The catalysed reaction is hydrogencarbonate(in) = hydrogencarbonate(out). It catalyses the reaction ATP + H2O = ADP + phosphate + H(+). In terms of biological role, epithelial ion channel that plays an important role in the regulation of epithelial ion and water transport and fluid homeostasis. Mediates the transport of chloride ions across the cell membrane. Possesses an intrinsic ATPase activity and utilizes ATP to gate its channel; the passive flow of anions through the channel is gated by cycles of ATP binding and hydrolysis by the ATP-binding domains. The ion channel is also permeable to HCO(3)(-); selectivity depends on the extracellular chloride concentration. Exerts its function also by modulating the activity of other ion channels and transporters. Contributes to the regulation of the pH and the ion content of the epithelial fluid layer. Modulates the activity of the epithelial sodium channel (ENaC) complex, in part by regulating the cell surface expression of the ENaC complex. May regulate bicarbonate secretion and salvage in epithelial cells by regulating the transporter SLC4A7. Can inhibit the chloride channel activity of ANO1. Plays a role in the chloride and bicarbonate homeostasis during sperm epididymal maturation and capacitation. The sequence is that of Cystic fibrosis transmembrane conductance regulator from Mus musculus (Mouse).